The following is a 1067-amino-acid chain: Kinesin-like protein KIF11 (1067 aa).

Residues asparagine 18–isoleucine 359 form the Kinesin motor domain. An ATP-binding site is contributed by glycine 105–threonine 112. Residues valine 365–phenylalanine 480 adopt a coiled-coil conformation. At threonine 937 the chain carries Phosphothreonine; by CDK1. Residue serine 1046 is modified to Phosphoserine; by NEK6. Residues isoleucine 1048–asparagine 1067 are disordered.

The protein belongs to the TRAFAC class myosin-kinesin ATPase superfamily. Kinesin family. BimC subfamily. Heterotetramer of two heavy and two light chains. Interacts with aurka. In terms of processing, phosphorylation of Thr-937 during mitosis controls the association of this protein with the spindle apparatus. A subset of this protein primarily localized at the spindle pole is phosphorylated by NEK6 during mitosis. Post-translationally, phosphorylated on a serine residue by aurka.

Its subcellular location is the cytoplasm. The protein resides in the cytoskeleton. It is found in the spindle pole. Plus end-directed motor protein required for establishing a bipolar spindle. Associates with both interphase and mitotic spindle microtubules. May be involved in nuclear divisions taking place during the development of unfertilized eggs. Required in non-mitotic cells for transport of secretory proteins from the Golgi complex to the cell surface. The protein is Kinesin-like protein KIF11 of Xenopus tropicalis (Western clawed frog).